The chain runs to 350 residues: Biotin synthase (350 aa).

Positions 38 to 262 (RQVQVSTLLS…MMPTSYVRLS (225 aa)) constitute a Radical SAM core domain. [4Fe-4S] cluster contacts are provided by Cys-53, Cys-57, and Cys-60. The [2Fe-2S] cluster site is built by Cys-97, Cys-128, Cys-188, and Arg-260.

Belongs to the radical SAM superfamily. Biotin synthase family. Homodimer. Requires [4Fe-4S] cluster as cofactor. It depends on [2Fe-2S] cluster as a cofactor.

It carries out the reaction (4R,5S)-dethiobiotin + (sulfur carrier)-SH + 2 reduced [2Fe-2S]-[ferredoxin] + 2 S-adenosyl-L-methionine = (sulfur carrier)-H + biotin + 2 5'-deoxyadenosine + 2 L-methionine + 2 oxidized [2Fe-2S]-[ferredoxin]. It participates in cofactor biosynthesis; biotin biosynthesis; biotin from 7,8-diaminononanoate: step 2/2. Functionally, catalyzes the conversion of dethiobiotin (DTB) to biotin by the insertion of a sulfur atom into dethiobiotin via a radical-based mechanism. This chain is Biotin synthase, found in Yersinia enterocolitica serotype O:8 / biotype 1B (strain NCTC 13174 / 8081).